We begin with the raw amino-acid sequence, 618 residues long: Dihydroxy-acid dehydratase (618 aa).

Residue Asp81 participates in Mg(2+) binding. Cys122 contributes to the [2Fe-2S] cluster binding site. Mg(2+) contacts are provided by Asp123 and Lys124. Position 124 is an N6-carboxylysine (Lys124). Cys195 provides a ligand contact to [2Fe-2S] cluster. Mg(2+) is bound at residue Glu491. The active-site Proton acceptor is Ser517.

The protein belongs to the IlvD/Edd family. As to quaternary structure, homodimer. The cofactor is [2Fe-2S] cluster. Requires Mg(2+) as cofactor.

It catalyses the reaction (2R)-2,3-dihydroxy-3-methylbutanoate = 3-methyl-2-oxobutanoate + H2O. The catalysed reaction is (2R,3R)-2,3-dihydroxy-3-methylpentanoate = (S)-3-methyl-2-oxopentanoate + H2O. It functions in the pathway amino-acid biosynthesis; L-isoleucine biosynthesis; L-isoleucine from 2-oxobutanoate: step 3/4. The protein operates within amino-acid biosynthesis; L-valine biosynthesis; L-valine from pyruvate: step 3/4. Its function is as follows. Functions in the biosynthesis of branched-chain amino acids. Catalyzes the dehydration of (2R,3R)-2,3-dihydroxy-3-methylpentanoate (2,3-dihydroxy-3-methylvalerate) into 2-oxo-3-methylpentanoate (2-oxo-3-methylvalerate) and of (2R)-2,3-dihydroxy-3-methylbutanoate (2,3-dihydroxyisovalerate) into 2-oxo-3-methylbutanoate (2-oxoisovalerate), the penultimate precursor to L-isoleucine and L-valine, respectively. The sequence is that of Dihydroxy-acid dehydratase from Dechloromonas aromatica (strain RCB).